A 427-amino-acid polypeptide reads, in one-letter code: Adenylosuccinate synthetase (427 aa).

Residues 12–18 and 40–42 each bind GTP; these read GDEGKGK and GHT. Catalysis depends on aspartate 13, which acts as the Proton acceptor. Residues aspartate 13 and glycine 40 each contribute to the Mg(2+) site. IMP is bound by residues 13 to 16, 38 to 41, threonine 128, arginine 142, glutamine 223, threonine 238, and arginine 302; these read DEGK and NAGH. Histidine 41 serves as the catalytic Proton donor. A substrate-binding site is contributed by 298–304; sequence TTTGRPR. Residues arginine 304, 330-332, and 412-414 contribute to the GTP site; these read SID and SVG.

This sequence belongs to the adenylosuccinate synthetase family. Homodimer. Mg(2+) serves as cofactor.

The protein resides in the cytoplasm. It catalyses the reaction IMP + L-aspartate + GTP = N(6)-(1,2-dicarboxyethyl)-AMP + GDP + phosphate + 2 H(+). The protein operates within purine metabolism; AMP biosynthesis via de novo pathway; AMP from IMP: step 1/2. Functionally, plays an important role in the de novo pathway of purine nucleotide biosynthesis. Catalyzes the first committed step in the biosynthesis of AMP from IMP. This is Adenylosuccinate synthetase from Staphylococcus aureus (strain N315).